Consider the following 747-residue polypeptide: MLGKGVVGGGGGTKAPKPSFVSYVRPEEIHTNEKEVTEKEVTLHLLPGEQLLCEASTVLKYVQEDSCQHGVYGRLVCTDFKIAFLGDDESALDNDETQFKNKVIGENDITLHCVDQIYGVFDEKKKTLFGQLKKYPEKLIIHCKDLRVFQFCLRYTKEEEVKRIVSGIIHHTQAPKLLKRLFLFSYATAAQNNTVTDPKNHTVMFDTLKDWCWELERTKGNMKYKAVSVNEGYKVCERLPAYFVVPTPLPEENVQRFQGHGIPIWCWSCHNGSALLKMSALPKEQDDGILQIQKSFLDGIYKTIHRPPYEIVKTEDLSSNFLSLQEIQTAYSKFKQLFLIDNSTEFWDTDIKWFSLLESSSWLDIIRRCLKKAIEITECMEAQNMNVLLLEENASDLCCLISSLVQLMMDPHCRTRIGFQSLIQKEWVMGGHCFLDRCNHLRQNDKEEVPVFLLFLDCVWQLVHQHPPAFEFTETYLTVLSDSLYIPIFSTFFFNSPHQKDTNMGREGQDTQSKPLNLLTVWDWSVQFEPKAQTLLKNPLYVEKPKLDKGQRKGMRFKHQRQLSLPLTQSKSSPKRGFFREETDHLIKNLLGKRISKLINSSDELQDNFREFYDSWHSKSTDYHGLLLPHIEGPEIKVWAQRYLRWIPEAQILGGGQVATLSKLLEMMEEVQSLQEKIDERHHSQQAPQAEAPCLLRNSARLSSLFPFALLQRHSSKPVLPTSGWKALGDEDDLAKREDEFVDLGDV.

In terms of domain architecture, Myotubularin phosphatase spans 205-643; it reads FDTLKDWCWE…PEIKVWAQRY (439 aa). Residues 449–558 form an interaction with MTM1 region; the sequence is VPVFLLFLDC…KGQRKGMRFK (110 aa). Residues Ser564, Ser601, and Ser716 each carry the phosphoserine modification.

It belongs to the protein-tyrosine phosphatase family. Non-receptor class myotubularin subfamily. In terms of assembly, heterodimer with lipid phosphatase MTM1. Heterodimer with lipid phosphatase MTMR2. In terms of tissue distribution, expressed in skeletal muscles (at protein level). Ubiquitous with prominent expression in brain, heart, kidney, placenta, and lung.

The protein localises to the cytoplasm. It is found in the sarcoplasmic reticulum. It localises to the myofibril. Its subcellular location is the sarcomere. Acts as an adapter for the myotubularin-related phosphatases. Regulates phosphatase MTM1 protein stability and possibly its intracellular location. By stabilizing MTM1 protein levels, required for skeletal muscle maintenance but not for myogenesis. The protein is Myotubularin-related protein 12 (MTMR12) of Homo sapiens (Human).